Reading from the N-terminus, the 378-residue chain is O-methyltransferase gsfD (378 aa).

S-adenosyl-L-methionine contacts are provided by residues 219–220 (GG), Asp244, 266–267 (DM), and Arg282. His286 functions as the Proton acceptor in the catalytic mechanism.

Belongs to the class I-like SAM-binding methyltransferase superfamily. Cation-independent O-methyltransferase family.

It catalyses the reaction desmethyl-dehydrogriseofulvin + S-adenosyl-L-methionine = dehydrogriseofulvin + S-adenosyl-L-homocysteine + H(+). It participates in secondary metabolite biosynthesis; terpenoid biosynthesis. Its function is as follows. O-methyltransferase; part of the gene cluster that mediates the biosynthesis of griseofulvin, an important antifungal drug that has been in use for a long time for treating dermatophyte infections. The first step of the pathway is the formation of the heptaketide backbone by gsfA which is initiated by priming with acetyl-CoA, followed by sequential condensations of 6 malonyl-CoA units. The resulting benzophenone can undergo a spontaneous dehydration to form norlichexanthone. However, the true precursor for the griseofulvin biosynthesis is not norlichexanthone, but the heptaketide benzophenone that is O-methylated at 3-OH by gsfB to produce griseophenone D which is further methylated at 9-OH by gsfC to yield griseophenone C. Griseophenone C is then substrate of halogenase gsfI which is responsible for the regio-specific chlorination at the C13 position to form griseophenone B. The cytochrome P450 gsfF catalyzes the coupling of orcinol and phloroglucinol rings in griseophenone B to form desmethyl-dehydrogriseofulvin A which is further methylated at 5-OH by gsfD to yield dehydrogriseofulvin. Finally, gsfE performs stereospecific reduction of enone 18 of dehydrogriseofulvin to afford the final product griseofulvin. This chain is O-methyltransferase gsfD, found in Penicillium aethiopicum.